Reading from the N-terminus, the 256-residue chain is Deoxyribose-phosphate aldolase (256 aa).

Catalysis depends on Asp102, which acts as the Proton donor/acceptor. Residue Lys165 is the Schiff-base intermediate with acetaldehyde of the active site. The Proton donor/acceptor role is filled by Lys197.

Belongs to the DeoC/FbaB aldolase family. DeoC type 2 subfamily.

The protein resides in the cytoplasm. The enzyme catalyses 2-deoxy-D-ribose 5-phosphate = D-glyceraldehyde 3-phosphate + acetaldehyde. It functions in the pathway carbohydrate degradation; 2-deoxy-D-ribose 1-phosphate degradation; D-glyceraldehyde 3-phosphate and acetaldehyde from 2-deoxy-alpha-D-ribose 1-phosphate: step 2/2. In terms of biological role, catalyzes a reversible aldol reaction between acetaldehyde and D-glyceraldehyde 3-phosphate to generate 2-deoxy-D-ribose 5-phosphate. The chain is Deoxyribose-phosphate aldolase from Shewanella oneidensis (strain ATCC 700550 / JCM 31522 / CIP 106686 / LMG 19005 / NCIMB 14063 / MR-1).